Consider the following 37-residue polypeptide: Cytochrome b6-f complex subunit 5 (37 aa).

A helical membrane pass occupies residues 5–25; sequence LLSGIVLGLIPITLAGLFVTA.

Belongs to the PetG family. As to quaternary structure, the 4 large subunits of the cytochrome b6-f complex are cytochrome b6, subunit IV (17 kDa polypeptide, PetD), cytochrome f and the Rieske protein, while the 4 small subunits are PetG, PetL, PetM and PetN. The complex functions as a dimer.

Its subcellular location is the plastid. It localises to the chloroplast thylakoid membrane. Component of the cytochrome b6-f complex, which mediates electron transfer between photosystem II (PSII) and photosystem I (PSI), cyclic electron flow around PSI, and state transitions. PetG is required for either the stability or assembly of the cytochrome b6-f complex. This is Cytochrome b6-f complex subunit 5 from Cryptomeria japonica (Japanese cedar).